Here is a 158-residue protein sequence, read N- to C-terminus: Cyclic pyranopterin monophosphate synthase (158 aa).

Residues 76 to 78 (LCH) and 114 to 115 (ME) contribute to the substrate site. Residue aspartate 129 is part of the active site.

It belongs to the MoaC family. In terms of assembly, homohexamer; trimer of dimers.

It catalyses the reaction (8S)-3',8-cyclo-7,8-dihydroguanosine 5'-triphosphate = cyclic pyranopterin phosphate + diphosphate. It functions in the pathway cofactor biosynthesis; molybdopterin biosynthesis. In terms of biological role, catalyzes the conversion of (8S)-3',8-cyclo-7,8-dihydroguanosine 5'-triphosphate to cyclic pyranopterin monophosphate (cPMP). In Shewanella woodyi (strain ATCC 51908 / MS32), this protein is Cyclic pyranopterin monophosphate synthase.